We begin with the raw amino-acid sequence, 436 residues long: MAENNSKNVDVRPKTSRSRSADRKDGYVWSGKKLSWSKKSESCSESEAIGTVENVEIPLRSQERQLSCSSIELDLDHSCGHRFLGRSLKQKLQDAVGQCFPIKNCSGRHSPGLPSKRKIHISELMLDKCPFPPRSDLAFRWHFIKRHTVPMSPNSDEWVSADLSERKLRDAQLKRRNTEDDIPCFSHTNGQPCVITANSASCTGGHITGSMMNLVTNNSIEDSDMDSEDEIITLCTSSRKRNKPRWEMEEEILQLEAPPKFHTQIDYVHCLVPDLLQISNNPCYWGVMDKYAAEALLEGKPEGTFLLRDSAQEDYLFSVSFRRYSRSLHARIEQWNHNFSFDAHDPCVFHSPDITGLLEHYKDPSACMFFEPLLSTPLIRTFPFSLQHICRTVICNCTTYDGIDALPIPSPMKLYLKEYHYKSKVRLLRIDVPEQQ.

The tract at residues 1–25 (MAENNSKNVDVRPKTSRSRSADRKD) is disordered. A compositionally biased stretch (basic and acidic residues) spans 9-25 (VDVRPKTSRSRSADRKD). Residues 283 to 378 (CYWGVMDKYA…FFEPLLSTPL (96 aa)) form the SH2 domain. One can recognise an SOCS box domain in the interval 373–422 (LLSTPLIRTFPFSLQHICRTVICNCTTYDGIDALPIPSPMKLYLKEYHYK).

The protein operates within protein modification; protein ubiquitination. In terms of biological role, SOCS family proteins form part of a classical negative feedback system that regulates cytokine signal transduction. Substrate-recognition component of a SCF-like ECS (Elongin BC-CUL2/5-SOCS-box protein) E3 ubiquitin-protein ligase complex which mediates the ubiquitination and subsequent proteasomal degradation of target proteins. Inhibits EGF signaling by mediating the degradation of the Tyr-phosphorylated EGF receptor/EGFR. The sequence is that of Suppressor of cytokine signaling 4 (Socs4) from Mus musculus (Mouse).